The following is a 439-amino-acid chain: Sex-determination protein fem-3 (439 aa).

Positions 21-45 (RRLKRKANDDDDDDETVRERVDDAE) are disordered.

In terms of assembly, component of a complex containing fem-1, fem-2 and fem-3. Interacts with fem-1 and fem-2 (via N-terminus). Part of a E3 ubiquitin-protein ligase complex, at least composed of cul-2, elc-1, tra-1, fem-1, fem-2 and fem-3; mediates the ubiquitination and subsequent proteasomal degradation of tra-1. Interacts with tra-1. Interacts with sel-10. Interacts with tra-2.

Required for male development. In XO (male) animals, fem-3 directs male differentiation in all tissues. In XX (hermaphrodite) animals, it specifies the first 80 or so germ cells to be sperm. Negatively regulates male development when bound to tra-2. Together with fem-2 associates with the CBC(fem-1) E3 ubiquitin-protein ligase complex which mediates the ubiquitination and subsequent proteasomal degradation of tra-1. The protein is Sex-determination protein fem-3 of Caenorhabditis remanei (Caenorhabditis vulgaris).